The chain runs to 365 residues: Fructose-1,6-bisphosphatase class 1 2 (365 aa).

Mg(2+) is bound by residues glutamate 100, aspartate 122, leucine 124, and aspartate 125. Substrate is bound by residues 125 to 128 (DGSS) and asparagine 221. Glutamate 293 lines the Mg(2+) pocket.

This sequence belongs to the FBPase class 1 family. As to quaternary structure, homotetramer. Requires Mg(2+) as cofactor.

The protein localises to the cytoplasm. The catalysed reaction is beta-D-fructose 1,6-bisphosphate + H2O = beta-D-fructose 6-phosphate + phosphate. Its pathway is carbohydrate biosynthesis; gluconeogenesis. The polypeptide is Fructose-1,6-bisphosphatase class 1 2 (Leptothrix cholodnii (strain ATCC 51168 / LMG 8142 / SP-6) (Leptothrix discophora (strain SP-6))).